Reading from the N-terminus, the 455-residue chain is Bifunctional protein GlmU (455 aa).

Positions 1 to 228 (MYKCALVLAA…YEETIGVNSR (228 aa)) are pyrophosphorylase. UDP-N-acetyl-alpha-D-glucosamine is bound by residues 8–11 (LAAG), K22, Q73, and 78–79 (GT). D103 lines the Mg(2+) pocket. Residues G140, E154, N169, and N226 each contribute to the UDP-N-acetyl-alpha-D-glucosamine site. Residue N226 coordinates Mg(2+). Residues 229–249 (VQLAEAEEILKNRINLMHMEN) are linker. Positions 250-455 (GVTLIDPRTT…GWVDKKGLKK (206 aa)) are N-acetyltransferase. Residues R331 and K349 each contribute to the UDP-N-acetyl-alpha-D-glucosamine site. H361 serves as the catalytic Proton acceptor. Y364 and N375 together coordinate UDP-N-acetyl-alpha-D-glucosamine. Residues 384 to 385 (NY), A421, and R438 contribute to the acetyl-CoA site.

This sequence in the N-terminal section; belongs to the N-acetylglucosamine-1-phosphate uridyltransferase family. It in the C-terminal section; belongs to the transferase hexapeptide repeat family. Homotrimer. Requires Mg(2+) as cofactor.

The protein resides in the cytoplasm. It carries out the reaction alpha-D-glucosamine 1-phosphate + acetyl-CoA = N-acetyl-alpha-D-glucosamine 1-phosphate + CoA + H(+). The enzyme catalyses N-acetyl-alpha-D-glucosamine 1-phosphate + UTP + H(+) = UDP-N-acetyl-alpha-D-glucosamine + diphosphate. It functions in the pathway nucleotide-sugar biosynthesis; UDP-N-acetyl-alpha-D-glucosamine biosynthesis; N-acetyl-alpha-D-glucosamine 1-phosphate from alpha-D-glucosamine 6-phosphate (route II): step 2/2. It participates in nucleotide-sugar biosynthesis; UDP-N-acetyl-alpha-D-glucosamine biosynthesis; UDP-N-acetyl-alpha-D-glucosamine from N-acetyl-alpha-D-glucosamine 1-phosphate: step 1/1. The protein operates within bacterial outer membrane biogenesis; LPS lipid A biosynthesis. Catalyzes the last two sequential reactions in the de novo biosynthetic pathway for UDP-N-acetylglucosamine (UDP-GlcNAc). The C-terminal domain catalyzes the transfer of acetyl group from acetyl coenzyme A to glucosamine-1-phosphate (GlcN-1-P) to produce N-acetylglucosamine-1-phosphate (GlcNAc-1-P), which is converted into UDP-GlcNAc by the transfer of uridine 5-monophosphate (from uridine 5-triphosphate), a reaction catalyzed by the N-terminal domain. In Clostridium beijerinckii (strain ATCC 51743 / NCIMB 8052) (Clostridium acetobutylicum), this protein is Bifunctional protein GlmU.